The following is a 212-amino-acid chain: Probable GTP-binding protein EngB (212 aa).

The EngB-type G domain maps to 38 to 210 (SLPEIAFVGK…KASLAKCIKP (173 aa)). Residues 46–53 (GKSNVGKS), 73–77 (GRTRQ), 91–94 (DLPG), 158–161 (TKSD), and 189–191 (VSN) contribute to the GTP site. Mg(2+)-binding residues include serine 53 and threonine 75.

Belongs to the TRAFAC class TrmE-Era-EngA-EngB-Septin-like GTPase superfamily. EngB GTPase family. Mg(2+) serves as cofactor.

In terms of biological role, necessary for normal cell division and for the maintenance of normal septation. The chain is Probable GTP-binding protein EngB from Rickettsia africae (strain ESF-5).